Consider the following 295-residue polypeptide: Mediator of RNA polymerase II transcription subunit 6 (295 aa).

The segment at 211 to 243 (TATAATNGNNAGGGSNKSSVRPTGGANMATVPS) is disordered. A Phosphoserine modification is found at serine 225.

Belongs to the Mediator complex subunit 6 family. In terms of assembly, component of the Mediator complex, which is composed of at least 21 subunits that form three structurally distinct submodules. The Mediator head module contains MED6, MED8, MED11, SRB4/MED17, SRB5/MED18, ROX3/MED19, SRB2/MED20 and SRB6/MED22, the middle module contains MED1, MED4, NUT1/MED5, MED7, CSE2/MED9, NUT2/MED10, SRB7/MED21 and SOH1/MED31, and the tail module contains MED2, PGD1/MED3, RGR1/MED14, GAL11/MED15 and SIN4/MED16. The head and the middle modules interact directly with RNA polymerase II, whereas the elongated tail module interacts with gene-specific regulatory proteins. MED6 interacts directly with SRB4/MED17 and SRB7/MED21.

Its subcellular location is the nucleus. Functionally, component of the Mediator complex, a coactivator involved in the regulated transcription of nearly all RNA polymerase II-dependent genes. Mediator functions as a bridge to convey information from gene-specific regulatory proteins to the basal RNA polymerase II transcription machinery. The Mediator complex, having a compact conformation in its free form, is recruited to promoters by direct interactions with regulatory proteins and serves for the assembly of a functional preinitiation complex with RNA polymerase II and the general transcription factors. The Mediator complex unfolds to an extended conformation and partially surrounds RNA polymerase II, specifically interacting with the unphosphorylated form of the C-terminal domain (CTD) of RNA polymerase II. The Mediator complex dissociates from the RNA polymerase II holoenzyme and stays at the promoter when transcriptional elongation begins. This is Mediator of RNA polymerase II transcription subunit 6 (MED6) from Saccharomyces cerevisiae (strain ATCC 204508 / S288c) (Baker's yeast).